We begin with the raw amino-acid sequence, 609 residues long: Alpha-glycerophosphate oxidase (609 aa).

21 to 49 (DVLIIGGGITGAGVAVQTAAAGMKTVLLE) serves as a coordination point for FAD.

FAD is required as a cofactor.

It is found in the cytoplasm. The enzyme catalyses sn-glycerol 3-phosphate + O2 = dihydroxyacetone phosphate + H2O2. It functions in the pathway membrane lipid metabolism; glycerophospholipid metabolism. In Enterococcus casseliflavus (Enterococcus flavescens), this protein is Alpha-glycerophosphate oxidase (glpO).